The chain runs to 207 residues: dTTP/UTP pyrophosphatase (207 aa).

Catalysis depends on Asp87, which acts as the Proton acceptor.

This sequence belongs to the Maf family. YhdE subfamily. The cofactor is a divalent metal cation.

It localises to the cytoplasm. It carries out the reaction dTTP + H2O = dTMP + diphosphate + H(+). The enzyme catalyses UTP + H2O = UMP + diphosphate + H(+). Its function is as follows. Nucleoside triphosphate pyrophosphatase that hydrolyzes dTTP and UTP. May have a dual role in cell division arrest and in preventing the incorporation of modified nucleotides into cellular nucleic acids. In Ralstonia nicotianae (strain ATCC BAA-1114 / GMI1000) (Ralstonia solanacearum), this protein is dTTP/UTP pyrophosphatase.